Reading from the N-terminus, the 382-residue chain is Anhydro-N-acetylmuramic acid kinase (382 aa).

15-22 (GTSLDGVD) lines the ATP pocket.

This sequence belongs to the anhydro-N-acetylmuramic acid kinase family.

It carries out the reaction 1,6-anhydro-N-acetyl-beta-muramate + ATP + H2O = N-acetyl-D-muramate 6-phosphate + ADP + H(+). It participates in amino-sugar metabolism; 1,6-anhydro-N-acetylmuramate degradation. The protein operates within cell wall biogenesis; peptidoglycan recycling. Functionally, catalyzes the specific phosphorylation of 1,6-anhydro-N-acetylmuramic acid (anhMurNAc) with the simultaneous cleavage of the 1,6-anhydro ring, generating MurNAc-6-P. Is required for the utilization of anhMurNAc either imported from the medium or derived from its own cell wall murein, and thus plays a role in cell wall recycling. This chain is Anhydro-N-acetylmuramic acid kinase, found in Haemophilus influenzae (strain ATCC 51907 / DSM 11121 / KW20 / Rd).